The following is a 245-amino-acid chain: NAD(P)H-quinone oxidoreductase subunit K (245 aa).

Cys58, Cys59, Cys123, and Cys154 together coordinate [4Fe-4S] cluster.

This sequence belongs to the complex I 20 kDa subunit family. NDH-1 can be composed of about 15 different subunits; different subcomplexes with different compositions have been identified which probably have different functions. [4Fe-4S] cluster serves as cofactor.

Its subcellular location is the cellular thylakoid membrane. It catalyses the reaction a plastoquinone + NADH + (n+1) H(+)(in) = a plastoquinol + NAD(+) + n H(+)(out). It carries out the reaction a plastoquinone + NADPH + (n+1) H(+)(in) = a plastoquinol + NADP(+) + n H(+)(out). NDH-1 shuttles electrons from an unknown electron donor, via FMN and iron-sulfur (Fe-S) centers, to quinones in the respiratory and/or the photosynthetic chain. The immediate electron acceptor for the enzyme in this species is believed to be plastoquinone. Couples the redox reaction to proton translocation, and thus conserves the redox energy in a proton gradient. Cyanobacterial NDH-1 also plays a role in inorganic carbon-concentration. The chain is NAD(P)H-quinone oxidoreductase subunit K from Trichormus variabilis (strain ATCC 29413 / PCC 7937) (Anabaena variabilis).